The chain runs to 424 residues: Glutamate-1-semialdehyde 2,1-aminomutase (424 aa).

N6-(pyridoxal phosphate)lysine is present on lysine 263.

Belongs to the class-III pyridoxal-phosphate-dependent aminotransferase family. HemL subfamily. Homodimer. Pyridoxal 5'-phosphate serves as cofactor.

The protein localises to the cytoplasm. The enzyme catalyses (S)-4-amino-5-oxopentanoate = 5-aminolevulinate. It participates in porphyrin-containing compound metabolism; protoporphyrin-IX biosynthesis; 5-aminolevulinate from L-glutamyl-tRNA(Glu): step 2/2. The chain is Glutamate-1-semialdehyde 2,1-aminomutase from Campylobacter jejuni subsp. jejuni serotype O:6 (strain 81116 / NCTC 11828).